The sequence spans 304 residues: MQSRFRSDRRLTVRMGVTLFLLGLLYVGFVAALIALLKSWVLVVVIVALVFGAQYWFSDRIALFAMRGRVVEREEYPELHGVVDRLAAMADMPKPVVAVSEMEMPNAFATGRNPDNAVVCVTTGLLRRLEPAELEGVLAHELSHVAHKDVAVITVASFLGVIAGLIVRFAFYSQLFGGRRDQNTLAVLAVVMGVSAAVYALSFLLIRALSRYRELAADRAAALLTGRPSALAAALTKVTGDIARIPTKDLRTAQAFNAFYFTPAFGSDPGLGRFFATHPSLEQRLDQLGRISTELGEAPAPGKA.

2 helical membrane-spanning segments follow: residues 17 to 37 (VTLF…IALL) and 39 to 59 (SWVL…WFSD). His-140 provides a ligand contact to Zn(2+). Glu-141 is a catalytic residue. His-144 contributes to the Zn(2+) binding site. 2 helical membrane-spanning segments follow: residues 151 to 171 (AVIT…RFAF) and 186 to 206 (AVLA…FLLI). Glu-214 contacts Zn(2+).

It belongs to the peptidase M48B family. Requires Zn(2+) as cofactor.

Its subcellular location is the cell membrane. This chain is Protease HtpX homolog 1, found in Streptomyces coelicolor (strain ATCC BAA-471 / A3(2) / M145).